Here is a 1035-residue protein sequence, read N- to C-terminus: Beta-galactosidase (1035 aa).

2 residues coordinate substrate: asparagine 109 and aspartate 208. Residue aspartate 208 coordinates Na(+). Mg(2+) is bound by residues glutamate 424, histidine 426, and glutamate 469. Substrate contacts are provided by residues glutamate 469 and 545-548; that span reads EYAH. Glutamate 469 acts as the Proton donor in catalysis. Glutamate 545 functions as the Nucleophile in the catalytic mechanism. Asparagine 605 lines the Mg(2+) pocket. Na(+) contacts are provided by phenylalanine 609 and asparagine 612. Substrate is bound by residues asparagine 612 and tryptophan 1011.

This sequence belongs to the glycosyl hydrolase 2 family. In terms of assembly, homotetramer. It depends on Mg(2+) as a cofactor. The cofactor is Na(+).

The enzyme catalyses Hydrolysis of terminal non-reducing beta-D-galactose residues in beta-D-galactosides.. This is Beta-galactosidase from Klebsiella pneumoniae (strain 342).